The chain runs to 93 residues: MPRSLKKGPFVDQHLYLKVLAENEKGSKNVIKTWSRRSMIIPDMLGHTIAVHDGRKHVPVFVTESMVGHKLGEFAPTRTFRGHVKDDKKGKRR.

Belongs to the universal ribosomal protein uS19 family.

In terms of biological role, protein S19 forms a complex with S13 that binds strongly to the 16S ribosomal RNA. The polypeptide is Small ribosomal subunit protein uS19 (Micrococcus luteus (strain ATCC 4698 / DSM 20030 / JCM 1464 / CCM 169 / CCUG 5858 / IAM 1056 / NBRC 3333 / NCIMB 9278 / NCTC 2665 / VKM Ac-2230) (Micrococcus lysodeikticus)).